A 320-amino-acid polypeptide reads, in one-letter code: Acetyl-coenzyme A carboxylase carboxyl transferase subunit alpha (320 aa).

Residues Arg-34–Gly-288 enclose the CoA carboxyltransferase C-terminal domain.

Belongs to the AccA family. As to quaternary structure, acetyl-CoA carboxylase is a heterohexamer composed of biotin carboxyl carrier protein (AccB), biotin carboxylase (AccC) and two subunits each of ACCase subunit alpha (AccA) and ACCase subunit beta (AccD).

It localises to the cytoplasm. The enzyme catalyses N(6)-carboxybiotinyl-L-lysyl-[protein] + acetyl-CoA = N(6)-biotinyl-L-lysyl-[protein] + malonyl-CoA. It functions in the pathway lipid metabolism; malonyl-CoA biosynthesis; malonyl-CoA from acetyl-CoA: step 1/1. Component of the acetyl coenzyme A carboxylase (ACC) complex. First, biotin carboxylase catalyzes the carboxylation of biotin on its carrier protein (BCCP) and then the CO(2) group is transferred by the carboxyltransferase to acetyl-CoA to form malonyl-CoA. The chain is Acetyl-coenzyme A carboxylase carboxyl transferase subunit alpha from Rubrobacter xylanophilus (strain DSM 9941 / JCM 11954 / NBRC 16129 / PRD-1).